Reading from the N-terminus, the 172-residue chain is Large ribosomal subunit protein uL10 (172 aa).

This sequence belongs to the universal ribosomal protein uL10 family. As to quaternary structure, part of the ribosomal stalk of the 50S ribosomal subunit. The N-terminus interacts with L11 and the large rRNA to form the base of the stalk. The C-terminus forms an elongated spine to which L12 dimers bind in a sequential fashion forming a multimeric L10(L12)X complex.

Functionally, forms part of the ribosomal stalk, playing a central role in the interaction of the ribosome with GTP-bound translation factors. This Chelativorans sp. (strain BNC1) protein is Large ribosomal subunit protein uL10.